Here is a 344-residue protein sequence, read N- to C-terminus: Methylthioribose-1-phosphate isomerase (344 aa).

Residues 55 to 57 (RGA), arginine 98, and glutamine 202 contribute to the substrate site. Aspartate 243 functions as the Proton donor in the catalytic mechanism. Residue 253-254 (NK) coordinates substrate.

The protein belongs to the eIF-2B alpha/beta/delta subunits family. MtnA subfamily.

It carries out the reaction 5-(methylsulfanyl)-alpha-D-ribose 1-phosphate = 5-(methylsulfanyl)-D-ribulose 1-phosphate. It functions in the pathway amino-acid biosynthesis; L-methionine biosynthesis via salvage pathway; L-methionine from S-methyl-5-thio-alpha-D-ribose 1-phosphate: step 1/6. Catalyzes the interconversion of methylthioribose-1-phosphate (MTR-1-P) into methylthioribulose-1-phosphate (MTRu-1-P). The sequence is that of Methylthioribose-1-phosphate isomerase from Gemmatimonas aurantiaca (strain DSM 14586 / JCM 11422 / NBRC 100505 / T-27).